A 550-amino-acid chain; its full sequence is Carboxypeptidase Y homolog A (550 aa).

A signal peptide spans Met-1 to Pro-18. The propeptide occupies Leu-19–Arg-131. 5 disulfide bridges follow: Cys-185-Cys-424, Cys-319-Cys-333, Cys-343-Cys-366, Cys-350-Cys-359, and Cys-388-Cys-394. Asn-216 carries an N-linked (GlcNAc...) asparagine glycan. Ser-272 is a catalytic residue. Asp-463 is an active-site residue. Residues Asn-493 and Asn-514 are each glycosylated (N-linked (GlcNAc...) asparagine). The active site involves His-525.

It belongs to the peptidase S10 family.

It localises to the vacuole. It carries out the reaction Release of a C-terminal amino acid with broad specificity.. In terms of biological role, vacuolar carboxypeptidase involved in degradation of small peptides. Digests preferentially peptides containing an aliphatic or hydrophobic residue in P1' position, as well as methionine, leucine or phenylalanine in P1 position of ester substrate. The sequence is that of Carboxypeptidase Y homolog A (CPYA) from Paracoccidioides lutzii (strain ATCC MYA-826 / Pb01) (Paracoccidioides brasiliensis).